We begin with the raw amino-acid sequence, 307 residues long: Adenosylcobinamide-GDP ribazoletransferase (307 aa).

8 consecutive transmembrane segments (helical) span residues 22 to 42 (PLFEGIFTALNWMTVLPVPGA), 58 to 78 (PFVGFVFGMFTAIIMWAIGPI), 80 to 100 (GVIHVDGLLVAVLIVAFWELL), 137 to 157 (FGLATAMLSVLLQVAAVASLV), 161 to 181 (VWWMICFIPVLGRIAGQVTAL), 212 to 232 (TAALAFWCAELISPLSPLTSV), 248 to 268 (AWLGGWVAITAVVACVFAALF), and 283 to 303 (CIGACIHLGASISAVMFAVVA).

It belongs to the CobS family. Requires Mg(2+) as cofactor.

It localises to the cell membrane. The enzyme catalyses alpha-ribazole + adenosylcob(III)inamide-GDP = adenosylcob(III)alamin + GMP + H(+). It carries out the reaction alpha-ribazole 5'-phosphate + adenosylcob(III)inamide-GDP = adenosylcob(III)alamin 5'-phosphate + GMP + H(+). Its pathway is cofactor biosynthesis; adenosylcobalamin biosynthesis; adenosylcobalamin from cob(II)yrinate a,c-diamide: step 7/7. Joins adenosylcobinamide-GDP and alpha-ribazole to generate adenosylcobalamin (Ado-cobalamin). Also synthesizes adenosylcobalamin 5'-phosphate from adenosylcobinamide-GDP and alpha-ribazole 5'-phosphate. The sequence is that of Adenosylcobinamide-GDP ribazoletransferase from Corynebacterium glutamicum (strain ATCC 13032 / DSM 20300 / JCM 1318 / BCRC 11384 / CCUG 27702 / LMG 3730 / NBRC 12168 / NCIMB 10025 / NRRL B-2784 / 534).